We begin with the raw amino-acid sequence, 235 residues long: Proteasome subunit beta type-1 (235 aa).

The propeptide occupies 1-20 (MSRLGFEQFPDYQVPGMKHP).

Belongs to the peptidase T1B family. The 26S proteasome consists of a 20S proteasome core and two 19S regulatory subunits. The 20S proteasome core is composed of 28 subunits that are arranged in four stacked rings, resulting in a barrel-shaped structure. The two end rings are each formed by seven alpha subunits, and the two central rings are each formed by seven beta subunits. The catalytic chamber with the active sites is on the inside of the barrel.

The protein resides in the cytoplasm. It is found in the nucleus. In terms of biological role, non-catalytic component of the proteasome, a multicatalytic proteinase complex which is characterized by its ability to cleave peptides with Arg, Phe, Tyr, Leu, and Glu adjacent to the leaving group at neutral or slightly basic pH. The proteasome has an ATP-dependent proteolytic activity. The chain is Proteasome subunit beta type-1 (Prosbeta6) from Drosophila melanogaster (Fruit fly).